The chain runs to 220 residues: Small ribosomal subunit protein uS3 (220 aa).

The region spanning 38-106 (IRKYVKGRLK…RVHININEIK (69 aa)) is the KH type-2 domain.

It belongs to the universal ribosomal protein uS3 family. In terms of assembly, part of the 30S ribosomal subunit. Forms a tight complex with proteins S10 and S14.

Its function is as follows. Binds the lower part of the 30S subunit head. Binds mRNA in the 70S ribosome, positioning it for translation. This chain is Small ribosomal subunit protein uS3, found in Brevibacillus brevis (strain 47 / JCM 6285 / NBRC 100599).